Here is a 202-residue protein sequence, read N- to C-terminus: Holliday junction resolvase RecU (202 aa).

4 residues coordinate Mg(2+): threonine 85, aspartate 87, glutamate 100, and glutamine 119.

The protein belongs to the RecU family. Requires Mg(2+) as cofactor.

It is found in the cytoplasm. It catalyses the reaction Endonucleolytic cleavage at a junction such as a reciprocal single-stranded crossover between two homologous DNA duplexes (Holliday junction).. Functionally, endonuclease that resolves Holliday junction intermediates in genetic recombination. Cleaves mobile four-strand junctions by introducing symmetrical nicks in paired strands. Promotes annealing of linear ssDNA with homologous dsDNA. Required for DNA repair, homologous recombination and chromosome segregation. In Streptococcus uberis (strain ATCC BAA-854 / 0140J), this protein is Holliday junction resolvase RecU.